The following is a 447-amino-acid chain: Probable aspartic protease At2g35615 (447 aa).

An N-terminal signal peptide occupies residues 1–20 (MATQILLCFFLFFSVTLSSS). N-linked (GlcNAc...) asparagine glycosylation occurs at N25. A Peptidase A1 domain is found at 85–439 (FFMSITIGTP…DLETRTVSFQ (355 aa)). Residue D103 is part of the active site. Residue N251 is glycosylated (N-linked (GlcNAc...) asparagine). Residue D326 is part of the active site.

It belongs to the peptidase A1 family.

The protein resides in the secreted. The sequence is that of Probable aspartic protease At2g35615 from Arabidopsis thaliana (Mouse-ear cress).